The chain runs to 183 residues: Capsid protein (183 aa).

Residues 136-183 (NAPILSTLPETTVVRRRGRSPRRRTPSPRRRRSQSPRRRRSQSRESQC) are disordered. The span at 149–176 (VRRRGRSPRRRTPSPRRRRSQSPRRRRS) shows a compositional bias: basic residues. Phosphoserine; by host is present on residues serine 155, serine 162, and serine 170. Residues 155-161 (SPRRRTP) form a 1; half-length repeat. The 3 X 8 AA repeats of S-P-R-R-R-[PR]-S-Q stretch occupies residues 155–177 (SPRRRTPSPRRRRSQSPRRRRSQ). The Bipartite nuclear localization signal motif lies at 158–175 (RRTPSPRRRRSQSPRRRR). 2 tandem repeats follow at residues 162-169 (SPRRRRSQ) and 170-177 (SPRRRRSQ). An RNA binding region spans residues 177-183 (QSRESQC).

It belongs to the orthohepadnavirus core antigen family. In terms of assembly, homodimerizes, then multimerizes. Interacts with cytosol exposed regions of viral L glycoprotein present in the reticulum-to-Golgi compartment. Interacts with human FLNB. Phosphorylated form interacts with host importin alpha; this interaction depends on the exposure of the NLS, which itself depends upon genome maturation and/or phosphorylation of the capsid protein. Interacts with host NUP153. Phosphorylated by host SRPK1, SRPK2, and maybe protein kinase C or GAPDH. Phosphorylation is critical for pregenomic RNA packaging. Protein kinase C phosphorylation is stimulated by HBx protein and may play a role in transport of the viral genome to the nucleus at the late step during the viral replication cycle.

Its subcellular location is the virion. The protein localises to the host cytoplasm. Its function is as follows. Self assembles to form an icosahedral capsid. Most capsids appear to be large particles with an icosahedral symmetry of T=4 and consist of 240 copies of capsid protein, though a fraction forms smaller T=3 particles consisting of 180 capsid proteins. Entering capsids are transported along microtubules to the nucleus. Phosphorylation of the capsid is thought to induce exposure of nuclear localization signal in the C-terminal portion of the capsid protein that allows binding to the nuclear pore complex via the importin (karyopherin-) alpha and beta. Capsids are imported in intact form through the nuclear pore into the nuclear basket, where it probably binds NUP153. Only capsids that contain the mature viral genome can release the viral DNA and capsid protein into the nucleoplasm. Immature capsids get stuck in the basket. Capsids encapsulate the pre-genomic RNA and the P protein. Pre-genomic RNA is reverse-transcribed into DNA while the capsid is still in the cytoplasm. The capsid can then either be directed to the nucleus, providing more genomes for transcription, or bud through the endoplasmic reticulum to provide new virions. The polypeptide is Capsid protein (Hepatitis B virus genotype B/C subtype adw (isolate Okinawa/pODW282/1998) (HBV-B)).